The chain runs to 216 residues: uncharacterized protein (216 aa).

A run of 6 helical transmembrane segments spans residues 12-32 (YVLG…FVLA), 48-68 (GVFL…ASLL), 74-94 (LFIG…VGML), 134-154 (ILFF…YPGL), 156-176 (FLVL…FLIF), and 191-211 (LAAG…VKLA).

This sequence belongs to the Rht family.

The protein resides in the cell membrane. This is an uncharacterized protein from Pseudomonas aeruginosa (strain ATCC 15692 / DSM 22644 / CIP 104116 / JCM 14847 / LMG 12228 / 1C / PRS 101 / PAO1).